A 195-amino-acid chain; its full sequence is SXP/RAL-2-like protein 2 (195 aa).

Positions 162 to 195 (EKVHGGSHGGLRGGPGGPRDGPRGGPRGGPRGGR) are disordered. Over residues 167–195 (GSHGGLRGGPGGPRDGPRGGPRGGPRGGR) the composition is skewed to gly residues.

The protein belongs to the SXP/RAL-2 family.

The sequence is that of SXP/RAL-2-like protein 2 from Caenorhabditis elegans.